A 26-amino-acid polypeptide reads, in one-letter code: Hemocyanin subunit B (26 aa).

The protein belongs to the tyrosinase family. Hemocyanin subfamily. In terms of tissue distribution, hemolymph.

The protein localises to the secreted. It localises to the extracellular space. Functionally, hemocyanins are copper-containing oxygen carriers occurring freely dissolved in the hemolymph of many mollusks and arthropods. The sequence is that of Hemocyanin subunit B from Carcinus maenas (Common shore crab).